Consider the following 152-residue polypeptide: tRNA-specific adenosine deaminase (152 aa).

The CMP/dCMP-type deaminase domain maps to 2 to 111 (AERTHFMELA…AQDPKGGAVE (110 aa)). H53 provides a ligand contact to Zn(2+). The Proton donor role is filled by E55. The Zn(2+) site is built by C83 and C86.

It belongs to the cytidine and deoxycytidylate deaminase family. As to quaternary structure, homodimer. Zn(2+) is required as a cofactor.

It carries out the reaction adenosine(34) in tRNA + H2O + H(+) = inosine(34) in tRNA + NH4(+). In terms of biological role, catalyzes the deamination of adenosine to inosine at the wobble position 34 of tRNA(Arg2). This is tRNA-specific adenosine deaminase from Agrobacterium fabrum (strain C58 / ATCC 33970) (Agrobacterium tumefaciens (strain C58)).